A 353-amino-acid polypeptide reads, in one-letter code: Photosystem II protein D1 (353 aa).

An N-acetylthreonine modification is found at T2. Position 2 is a phosphothreonine (T2). 3 consecutive transmembrane segments (helical) span residues 29-46 (YIGW…TATS), 118-133 (HFFL…EWEL), and 142-156 (WIAV…AATA). H118 contacts chlorophyll a. Y126 provides a ligand contact to pheophytin a. 2 residues coordinate [CaMn4O5] cluster: D170 and E189. The helical transmembrane segment at 197 to 218 (FHMLGVAGVFGGSLFSAMHGSL) threads the bilayer. Chlorophyll a is bound at residue H198. A quinone-binding positions include H215 and 264-265 (SF). A Fe cation-binding site is contributed by H215. H272 contacts Fe cation. A helical transmembrane segment spans residues 274–288 (FLAAWPVVGIWFTAL). [CaMn4O5] cluster-binding residues include H332, E333, D342, and A344. Positions 345–353 (VVEAPAVNG) are excised as a propeptide.

The protein belongs to the reaction center PufL/M/PsbA/D family. In terms of assembly, PSII is composed of 1 copy each of membrane proteins PsbA, PsbB, PsbC, PsbD, PsbE, PsbF, PsbH, PsbI, PsbJ, PsbK, PsbL, PsbM, PsbT, PsbX, PsbY, PsbZ, Psb30/Ycf12, at least 3 peripheral proteins of the oxygen-evolving complex and a large number of cofactors. It forms dimeric complexes. The D1/D2 heterodimer binds P680, chlorophylls that are the primary electron donor of PSII, and subsequent electron acceptors. It shares a non-heme iron and each subunit binds pheophytin, quinone, additional chlorophylls, carotenoids and lipids. D1 provides most of the ligands for the Mn4-Ca-O5 cluster of the oxygen-evolving complex (OEC). There is also a Cl(-1) ion associated with D1 and D2, which is required for oxygen evolution. The PSII complex binds additional chlorophylls, carotenoids and specific lipids. serves as cofactor. In terms of processing, tyr-161 forms a radical intermediate that is referred to as redox-active TyrZ, YZ or Y-Z. C-terminally processed by CTPA; processing is essential to allow assembly of the oxygen-evolving complex and thus photosynthetic growth.

It localises to the plastid. Its subcellular location is the chloroplast thylakoid membrane. It carries out the reaction 2 a plastoquinone + 4 hnu + 2 H2O = 2 a plastoquinol + O2. Functionally, photosystem II (PSII) is a light-driven water:plastoquinone oxidoreductase that uses light energy to abstract electrons from H(2)O, generating O(2) and a proton gradient subsequently used for ATP formation. It consists of a core antenna complex that captures photons, and an electron transfer chain that converts photonic excitation into a charge separation. The D1/D2 (PsbA/PsbD) reaction center heterodimer binds P680, the primary electron donor of PSII as well as several subsequent electron acceptors. The chain is Photosystem II protein D1 from Chlorella vulgaris (Green alga).